The following is a 456-amino-acid chain: Keratin, type I cytoskeletal 12 (456 aa).

A compositionally biased stretch (polar residues) spans 1–19 (MSLSVRTSALSRRSSSQNG). The disordered stretch occupies residues 1–25 (MSLSVRTSALSRRSSSQNGVAGRPW). Residues 1–114 (MSLSVRTSAL…GNDGGLLSGS (114 aa)) form a head region. The interval 115 to 150 (EKETMQNLNDRLASYLGKVRALEEANAELENKIREW) is coil 1A. Residues 115 to 402 (EKETMQNLND…RLLEGDTQGD (288 aa)) form the IF rod domain. The tract at residues 154 to 171 (RRTGDSGSQSDYSKYYPL) is linker 1. Positions 172–263 (IEDLKNKIIS…KNHEEELQSF (92 aa)) are coil 1B. Residues 264-286 (QAGGPGEVNVEMDAAPGVDLTKS) form a linker 12 region. The interval 287 to 397 (GELRKEINSN…IETYRRLLEG (111 aa)) is coil 2. The segment at 398–456 (DTQGDGFDESLSLTVSKPQAPSVDSSKDPNKTRKIKTVVQEIVNGEVVSSQVQELEEAM) is tail. The tract at residues 405 to 430 (DESLSLTVSKPQAPSVDSSKDPNKTR) is disordered. Residues 408–421 (LSLTVSKPQAPSVD) are compositionally biased toward polar residues.

This sequence belongs to the intermediate filament family. In terms of assembly, heterotetramer of two type I and two type II keratins. Keratin-3 associates with keratin-12.

Functionally, involved in corneal epithelium organization, integrity and corneal keratin expression. This chain is Keratin, type I cytoskeletal 12, found in Rattus norvegicus (Rat).